Consider the following 429-residue polypeptide: MSSIIDIFAREILDSRGNPTVEVEVELDSGAVGRAAVPSGASTGAFEAVELRDGDKSRYLGKGVLKAVQNVNDIIAPELIGMEAQDQVAIDKAMIELDGTPNKSKLGANAILGVSLAVAKAAAEECGLPLYQYIGGVNAKTLPVPMMNILNGGKHADNNVDIQEFMIMPVGAPNFREALRMCSEVYHNLKNVLHSKGLSTTVGDEGGFAPNLTSNEEAIQVILEAIEKAGYVPGEDIVLALDPAATEMYKEDGKYHFEGEGIVRTSAEMVDFWEQLVNKYPIVSIEDGLAEEDWNGWKLLTERLGKKIQLVGDDLFVTNTQRLSKGISMGVANSILIKLNQIGTLTETLDAIEMAKRAGYTAVVSHRSGETEDSTIADLVVGVNAGQIKTGAPARTDRVAKYNQLLRIEEVLGSTAQYLGKNAFYNIKK.

Q163 serves as a coordination point for (2R)-2-phosphoglycerate. Catalysis depends on E205, which acts as the Proton donor. 3 residues coordinate Mg(2+): D242, E286, and D313. (2R)-2-phosphoglycerate contacts are provided by K338, R367, S368, and K389. K338 functions as the Proton acceptor in the catalytic mechanism.

This sequence belongs to the enolase family. The cofactor is Mg(2+).

The protein localises to the cytoplasm. Its subcellular location is the secreted. It localises to the cell surface. It carries out the reaction (2R)-2-phosphoglycerate = phosphoenolpyruvate + H2O. It participates in carbohydrate degradation; glycolysis; pyruvate from D-glyceraldehyde 3-phosphate: step 4/5. Its function is as follows. Catalyzes the reversible conversion of 2-phosphoglycerate (2-PG) into phosphoenolpyruvate (PEP). It is essential for the degradation of carbohydrates via glycolysis. The polypeptide is Enolase (Thermoanaerobacter sp. (strain X514)).